The primary structure comprises 225 residues: Probable 3-keto-L-gulonate-6-phosphate decarboxylase (225 aa).

Aspartate 11 contacts substrate. Positions 33 and 62 each coordinate Mg(2+). A substrate-binding site is contributed by arginine 202.

The protein belongs to the HPS/KGPDC family. KGPDC subfamily. Homodimer. The cofactor is Mg(2+).

It carries out the reaction 3-dehydro-L-gulonate 6-phosphate + H(+) = L-xylulose 5-phosphate + CO2. Its function is as follows. Catalyzes the decarboxylation of 3-keto-L-gulonate-6-P into L-xylulose-5-P. This Haemophilus influenzae (strain ATCC 51907 / DSM 11121 / KW20 / Rd) protein is Probable 3-keto-L-gulonate-6-phosphate decarboxylase (sgbH).